The sequence spans 287 residues: F-actin-capping protein subunit beta (287 aa).

The residue at position 2 (S2) is an N-acetylserine. A phosphoserine mark is found at S85 and S92.

The protein belongs to the F-actin-capping protein beta subunit family. Component of the F-actin capping complex, composed of a heterodimer of an alpha and a beta subunit. Interacts with BSP1 (via C-terminus); leading to recruitment of the F-actin capping complex to actin cortical patches and the acomyosin contractile ring.

The protein localises to the cytoplasm. It is found in the cytoskeleton. It localises to the actin patch. Its subcellular location is the bud. The protein resides in the bud tip. Functionally, F-actin-capping proteins bind in a Ca(2+)-independent manner to the fast growing ends of actin filaments (barbed end) thereby blocking the exchange of subunits at these ends. Unlike other capping proteins (such as gelsolin and severin), these proteins do not sever actin filaments. This chain is F-actin-capping protein subunit beta (CAP2), found in Saccharomyces cerevisiae (strain ATCC 204508 / S288c) (Baker's yeast).